The following is a 279-amino-acid chain: uncharacterized protein (279 aa).

Transmembrane regions (helical) follow at residues 29-49 (PYNMIAGAIGAVVLTILALVF), 77-97 (VLYALAPLIPLVILVIGGTSL), 105-125 (WTKMGVPQAMLIGAIYGIIVT), 147-167 (VLGIIIAASVFVAGLKSTGAV), 186-206 (TIGPFLMGLITGSGDAAAIAF), and 240-260 (PIAGVTIVCAGLAMVSPVEMV).

The protein belongs to the DcuC/DcuD transporter (TC 2.A.61) family.

The protein resides in the cell membrane. This is an uncharacterized protein from Haemophilus influenzae (strain ATCC 51907 / DSM 11121 / KW20 / Rd).